A 312-amino-acid chain; its full sequence is Olfactory receptor 2L2 (312 aa).

Topologically, residues Met-1–Leu-24 are extracellular. A glycan (N-linked (GlcNAc...) asparagine) is linked at Asn-5. The helical transmembrane segment at Phe-25–Ile-48 threads the bilayer. At Phe-49–Thr-56 the chain is on the cytoplasmic side. The helical transmembrane segment at Pro-57–Pro-78 threads the bilayer. At Lys-79–Gln-99 the chain is on the extracellular side. Asn-88 carries an N-linked (GlcNAc...) asparagine glycan. A disulfide bridge links Cys-96 with Cys-188. The helical transmembrane segment at Ser-100–Tyr-119 threads the bilayer. Topologically, residues Asp-120 to Arg-138 are cytoplasmic. Residues Val-139–Ala-157 form a helical membrane-spanning segment. Residues His-158–Tyr-194 lie on the Extracellular side of the membrane. A helical transmembrane segment spans residues Glu-195–Gly-218. The Cytoplasmic portion of the chain corresponds to Arg-219 to Lys-235. A helical transmembrane segment spans residues Ala-236 to Tyr-258. The Extracellular segment spans residues Val-259–Lys-271. Residues Ile-272 to Leu-291 traverse the membrane as a helical segment. At Arg-292–Met-312 the chain is on the cytoplasmic side.

The protein belongs to the G-protein coupled receptor 1 family.

The protein resides in the cell membrane. In terms of biological role, odorant receptor. The sequence is that of Olfactory receptor 2L2 (OR2L2) from Homo sapiens (Human).